Reading from the N-terminus, the 616-residue chain is Dihydroxy-acid dehydratase (616 aa).

A Mg(2+)-binding site is contributed by D81. C122 serves as a coordination point for [2Fe-2S] cluster. Residues D123 and K124 each contribute to the Mg(2+) site. K124 carries the N6-carboxylysine modification. C195 provides a ligand contact to [2Fe-2S] cluster. E491 is a binding site for Mg(2+). The Proton acceptor role is filled by S517.

It belongs to the IlvD/Edd family. In terms of assembly, homodimer. [2Fe-2S] cluster is required as a cofactor. It depends on Mg(2+) as a cofactor.

It catalyses the reaction (2R)-2,3-dihydroxy-3-methylbutanoate = 3-methyl-2-oxobutanoate + H2O. It carries out the reaction (2R,3R)-2,3-dihydroxy-3-methylpentanoate = (S)-3-methyl-2-oxopentanoate + H2O. It participates in amino-acid biosynthesis; L-isoleucine biosynthesis; L-isoleucine from 2-oxobutanoate: step 3/4. The protein operates within amino-acid biosynthesis; L-valine biosynthesis; L-valine from pyruvate: step 3/4. In terms of biological role, functions in the biosynthesis of branched-chain amino acids. Catalyzes the dehydration of (2R,3R)-2,3-dihydroxy-3-methylpentanoate (2,3-dihydroxy-3-methylvalerate) into 2-oxo-3-methylpentanoate (2-oxo-3-methylvalerate) and of (2R)-2,3-dihydroxy-3-methylbutanoate (2,3-dihydroxyisovalerate) into 2-oxo-3-methylbutanoate (2-oxoisovalerate), the penultimate precursor to L-isoleucine and L-valine, respectively. The sequence is that of Dihydroxy-acid dehydratase from Pectobacterium atrosepticum (strain SCRI 1043 / ATCC BAA-672) (Erwinia carotovora subsp. atroseptica).